A 150-amino-acid polypeptide reads, in one-letter code: N-alpha-acetyltransferase 30 (150 aa).

In terms of domain architecture, N-acetyltransferase spans 2–150 (VTIVPYSHQY…DAFRYILYPN (149 aa)).

Belongs to the acetyltransferase family. MAK3 subfamily.

The protein localises to the cytoplasm. The protein resides in the nucleus. It carries out the reaction N-terminal L-methionyl-L-leucyl-[protein] + acetyl-CoA = N-terminal N(alpha)-acetyl-L-methionyl-L-leucyl-[protein] + CoA + H(+). The catalysed reaction is N-terminal L-methionyl-L-isoleucyl-[protein] + acetyl-CoA = N-terminal N(alpha)-acetyl-L-methionyl-L-isoleucyl-[protein] + CoA + H(+). It catalyses the reaction N-terminal L-methionyl-L-phenylalanyl-[protein] + acetyl-CoA = N-terminal N(alpha)-acetyl-L-methionyl-L-phenylalanyl-[protein] + CoA + H(+). The enzyme catalyses N-terminal L-methionyl-L-tryptophyl-[protein] + acetyl-CoA = N-terminal N(alpha)-acetyl-L-methionyl-L-tryptophyl-[protein] + CoA + H(+). It carries out the reaction N-terminal L-methionyl-L-tyrosyl-[protein] + acetyl-CoA = N-terminal N(alpha)-acetyl-L-methionyl-L-tyrosyl-[protein] + CoA + H(+). Catalytic component of the NatC N-terminal acetyltransferase. In Schizosaccharomyces pombe (strain 972 / ATCC 24843) (Fission yeast), this protein is N-alpha-acetyltransferase 30 (naa30).